A 268-amino-acid polypeptide reads, in one-letter code: Taurine import ATP-binding protein TauB (268 aa).

Residues 4–236 (LAIRNISMRF…EGVDADLREV (233 aa)) enclose the ABC transporter domain. An ATP-binding site is contributed by 41 to 48 (GPSGCGKT).

This sequence belongs to the ABC transporter superfamily. Taurine importer (TC 3.A.1.17.1) family. In terms of assembly, the complex is composed of two ATP-binding proteins (TauB), two transmembrane proteins (TauC) and a solute-binding protein (TauA).

It is found in the cell inner membrane. It catalyses the reaction taurine(out) + ATP + H2O = taurine(in) + ADP + phosphate + H(+). Functionally, part of the ABC transporter complex TauABC involved in taurine import. Responsible for energy coupling to the transport system. This Jannaschia sp. (strain CCS1) protein is Taurine import ATP-binding protein TauB.